The sequence spans 357 residues: Thiamine thiazole synthase, chloroplastic (357 aa).

Residues Ala102, 123–124 (EQ), Gly131, and Val196 contribute to the substrate site. The residue at position 233 (Cys233) is a 2,3-didehydroalanine (Cys). Substrate-binding positions include Asp235, His250, Met304, and 314–316 (RMG).

The protein belongs to the THI4 family. In terms of assembly, homooctamer. Fe cation is required as a cofactor. In terms of processing, during the catalytic reaction, a sulfide is transferred from Cys-233 to a reaction intermediate, generating a dehydroalanine residue.

The protein resides in the plastid. Its subcellular location is the chloroplast. It catalyses the reaction [ADP-thiazole synthase]-L-cysteine + glycine + NAD(+) = [ADP-thiazole synthase]-dehydroalanine + ADP-5-ethyl-4-methylthiazole-2-carboxylate + nicotinamide + 3 H2O + 2 H(+). Involved in biosynthesis of the thiamine precursor thiazole. Catalyzes the conversion of NAD and glycine to adenosine diphosphate 5-(2-hydroxyethyl)-4-methylthiazole-2-carboxylic acid (ADT), an adenylated thiazole intermediate. The reaction includes an iron-dependent sulfide transfer from a conserved cysteine residue of the protein to a thiazole intermediate. The enzyme can only undergo a single turnover, which suggests it is a suicide enzyme. May have additional roles in adaptation to various stress conditions and in DNA damage tolerance. This is Thiamine thiazole synthase, chloroplastic from Chlamydomonas reinhardtii (Chlamydomonas smithii).